Here is a 507-residue protein sequence, read N- to C-terminus: Zinc finger protein Aiolos (507 aa).

The interval 1-85 is disordered; that stretch reads MEDIQPTVEL…PMGDAEESEM (85 aa). Thr20 bears the Phosphothreonine mark. A phosphoserine mark is found at Ser22 and Ser42. 2 stretches are compositionally biased toward basic and acidic residues: residues 33–46 and 56–72; these read KPHE…REAP and DSMK…ENIM. Glycyl lysine isopeptide (Lys-Gly) (interchain with G-Cter in SUMO2) cross-links involve residues Lys61, Lys73, and Lys100. 3 consecutive C2H2-type zinc fingers follow at residues 117 to 139, 145 to 167, and 173 to 195; these read MNCD…KRSH, FQCN…IKLH, and FKCH…LRTH. The C2H2-type 4; atypical zinc finger occupies 201 to 223; it reads YKCEFCGRSYKQRSSLEEHKERC. Lys244 is covalently cross-linked (Glycyl lysine isopeptide (Lys-Gly) (interchain with G-Cter in SUMO2)). Thr325 is subject to Phosphothreonine. Residues 370–396 form a disordered region; that stretch reads LPSERGLSPNNSAQDSTDTDSNHEDRQ. Phosphoserine is present on Ser377. The segment at 450–472 adopts a C2H2-type 5 zinc-finger fold; the sequence is FRCDHCHVLFLDYVMFTIHMGCH. The tract at residues 450–502 is mediates homodimerization and heterodimerization; the sequence is FRCDHCHVLFLDYVMFTIHMGCHGFRDPFECNMCGYRSHDRYEFSSHIARGEH. Residues 478–502 form a C2H2-type 6; atypical zinc finger; the sequence is FECNMCGYRSHDRYEFSSHIARGEH.

Belongs to the Ikaros C2H2-type zinc-finger protein family. As to quaternary structure, homodimer. Heterodimer with other IKAROS family members. Interacts with IKZF4 and IKZF5. Interacts with HRAS. Interacts with FOXP3; this interaction may be required for silencing target genes and regulating the suppressive activity of FOXP3-positive regulatory T-cells (Treg). Interacts with BCL21L isoform Bcl-X(L); this interaction blocks the anti-apoptotic role of BCL21L. Associates with histone deacetylase complexes containing HDAC1, MTA2 and SIN3A. Interacts with IKZF1. In terms of tissue distribution, expression is restricted to lymphoid tissues. Expressed at highest levels in spleen and at lower levels in the thymus and bone marrow. First detected in more committed lymphoid progenitors and strongly up-regulated as these differentiate into pre-T and pre-B cell precursors.

The protein resides in the nucleus. Its subcellular location is the cytoplasm. Transcription factor that plays an important role in the regulation of lymphocyte differentiation. Binds to GGGAA. Plays an essential role in regulation of B-cell differentiation, proliferation and maturation to an effector state. Involved in regulating BCL2 expression and controlling apoptosis in T-cells in an IL2-dependent manner. This chain is Zinc finger protein Aiolos (Ikzf3), found in Mus musculus (Mouse).